We begin with the raw amino-acid sequence, 191 residues long: Thymidylate kinase (191 aa).

7-14 (GVDGAGKS) contacts ATP.

Belongs to the thymidylate kinase family.

It carries out the reaction dTMP + ATP = dTDP + ADP. In terms of biological role, phosphorylation of dTMP to form dTDP in both de novo and salvage pathways of dTTP synthesis. The chain is Thymidylate kinase from Helicobacter pylori (strain P12).